The sequence spans 584 residues: Tyrosine-protein kinase Dnt (584 aa).

A signal peptide spans 1-40; that stretch reads MESVNKCGKSASTRNCTVKMSRKMWVLSLLALAALQLHSG. The Extracellular segment spans residues 41–208; the sequence is SEVAAHLNVF…LETVMLPPTG (168 aa). Positions 49 to 180 constitute a WIF domain; sequence VFLNPVEVMR…HLVFRRKKIC (132 aa). N-linked (GlcNAc...) asparagine glycosylation is found at asparagine 124, asparagine 163, asparagine 168, and asparagine 183. Residues 209–229 form a helical membrane-spanning segment; it reads LITLVVGVSVAMGSVCLLLMI. Topologically, residues 230-584 are cytoplasmic; that stretch reads AYCVKGAANK…EFYSQITRYV (355 aa). The interval 241 to 261 is disordered; sequence QHHQHGGQPMRTSSFQRLNTH. The span at 250-261 shows a compositional bias: polar residues; that stretch reads MRTSSFQRLNTH. One can recognise a Protein kinase domain in the interval 317 to 577; sequence VRLSSLLQEG…QLQSCLSEFY (261 aa). ATP is bound by residues 323 to 331 and lysine 345; that span reads LQEGTFGRV. The active-site Proton acceptor is the aspartate 442. A Phosphotyrosine; by autocatalysis modification is found at tyrosine 472.

It belongs to the protein kinase superfamily. Tyr protein kinase family. Expressed in dynamic domains in the embryonic epidermis, many of which border on sites of epithelial invagination into the embryo interior, including ventral furrow, cephalic furrow, fore- and hindgut, optic lobe and tracheal pits. Later in embryogenesis, expression is seen in imaginal tissues.

It is found in the cell membrane. It catalyses the reaction L-tyrosyl-[protein] + ATP = O-phospho-L-tyrosyl-[protein] + ADP + H(+). Functionally, may play an essential role in neuronal pathway recognition and ventral muscle attachment site selection. The chain is Tyrosine-protein kinase Dnt (dnt) from Drosophila melanogaster (Fruit fly).